The sequence spans 339 residues: Deubiquitinase and deneddylase Dub2 (339 aa).

A helical membrane pass occupies residues 36–56; it reads IIIALFLIVISCGLILCAYTF. Residues His203, Asp220, and Cys282 contribute to the active site.

This sequence belongs to the peptidase C48 family.

Its subcellular location is the secreted. The protein localises to the host cell. The protein resides in the membrane. Functionally, effector proteins function to alter host cell physiology and promote bacterial survival in host tissues. This protease possesses deubiquitinating and deneddylating activities. In Chlamydia trachomatis serovar B (strain Jali20/OT), this protein is Deubiquitinase and deneddylase Dub2 (cdu2).